The following is a 165-amino-acid chain: Glutamyl-tRNA(Gln) amidotransferase subunit F, mitochondrial (165 aa).

The transit peptide at 1 to 19 (MKSILRSTTRNLITSSRRF) directs the protein to the mitochondrion.

This sequence belongs to the GatF family. Subunit of the heterotrimeric GatFAB amidotransferase (AdT) complex, composed of A, B and F subunits.

It localises to the mitochondrion inner membrane. It catalyses the reaction L-glutamyl-tRNA(Gln) + L-glutamine + ATP + H2O = L-glutaminyl-tRNA(Gln) + L-glutamate + ADP + phosphate + H(+). Allows the formation of correctly charged Gln-tRNA(Gln) through the transamidation of misacylated Glu-tRNA(Gln) in the mitochondria. The reaction takes place in the presence of glutamine and ATP through an activated gamma-phospho-Glu-tRNA(Gln). Required for proper protein synthesis within the mitochondrion. This is Glutamyl-tRNA(Gln) amidotransferase subunit F, mitochondrial from Candida albicans (strain SC5314 / ATCC MYA-2876) (Yeast).